The following is a 153-amino-acid chain: Endoribonuclease YbeY (153 aa).

3 residues coordinate Zn(2+): His-118, His-122, and His-128.

The protein belongs to the endoribonuclease YbeY family. Zn(2+) is required as a cofactor.

Its subcellular location is the cytoplasm. In terms of biological role, single strand-specific metallo-endoribonuclease involved in late-stage 70S ribosome quality control and in maturation of the 3' terminus of the 16S rRNA. The sequence is that of Endoribonuclease YbeY from Chloroflexus aggregans (strain MD-66 / DSM 9485).